A 260-amino-acid polypeptide reads, in one-letter code: Carbonic anhydrase 3 (260 aa).

Residue alanine 2 is modified to N-acetylalanine. The Alpha-carbonic anhydrase domain occupies 3-259 (KEWGYASHNG…INNRVVRASF (257 aa)). Serine 29, serine 43, serine 48, serine 50, and serine 55 each carry phosphoserine. Positions 64–67 (KTCR) are involved in proton transfer. Threonine 73 is subject to Phosphothreonine. The Zn(2+) site is built by histidine 94, histidine 96, and histidine 119. A Phosphotyrosine modification is found at tyrosine 127. 2 positions are modified to phosphothreonine: threonine 129 and threonine 176. S-glutathionyl cysteine occurs at positions 182 and 187. Position 198-199 (198-199 (TT)) interacts with substrate. Residue threonine 216 is modified to Phosphothreonine. Phosphoserine is present on serine 219.

This sequence belongs to the alpha-carbonic anhydrase family. Zn(2+) is required as a cofactor. Post-translationally, S-thiolated both by thiol-disulfide exchange with glutathione disulfide and by oxyradical-initiated S-thiolation with reduced glutathione. S-glutathionylated in hepatocytes under oxidative stress. As to expression, muscle specific.

The protein localises to the cytoplasm. The enzyme catalyses hydrogencarbonate + H(+) = CO2 + H2O. Activated by proton donors such as imidazole and the dipeptide histidylhistidine. Inhibited by coumarins and sulfonamide derivatives such as acetazolamide. Functionally, reversible hydration of carbon dioxide. This chain is Carbonic anhydrase 3, found in Homo sapiens (Human).